Consider the following 520-residue polypeptide: Cell division control protein 3 (520 aa).

A compositionally biased stretch (basic and acidic residues) spans 1–24; sequence MSLKEEQVSIKQDPEQEERQHDQF. Residues 1 to 83 form a disordered region; the sequence is MSLKEEQVSI…SSQSEKGQVL (83 aa). Ser-2 bears the N-acetylserine mark. Ser-2 bears the Phosphoserine mark. Residue Lys-4 forms a Glycyl lysine isopeptide (Lys-Gly) (interchain with G-Cter in SUMO) linkage. Position 9 is a phosphoserine (Ser-9). Glycyl lysine isopeptide (Lys-Gly) (interchain with G-Cter in SUMO) cross-links involve residues Lys-11 and Lys-30. At Thr-47 the chain carries Phosphothreonine. Residues 51–64 show a composition bias toward basic and acidic residues; sequence DSERFEAAESDVKV. The residue at position 60 (Ser-60) is a Phosphoserine. Lys-63 is covalently cross-linked (Glycyl lysine isopeptide (Lys-Gly) (interchain with G-Cter in SUMO)). Ser-77 bears the Phosphoserine mark. The Septin-type G domain maps to 116 to 411; the sequence is NGFSFNLLCV…ENYRSSKLAK (296 aa). Positions 126–133 are G1 motif; sequence GPDGIGKT. A GTP-binding site is contributed by 126–133; that stretch reads GPDGIGKT. Positions 156 to 167 are enriched in acidic residues; that stretch reads ELANDQEEEEGQ. The disordered stretch occupies residues 156–181; that stretch reads ELANDQEEEEGQGEGHENQSQEQRHK. A compositionally biased stretch (basic and acidic residues) spans 168–179; it reads GEGHENQSQEQR. The residue at position 175 (Ser-175) is a Phosphoserine. The G3 motif stretch occupies residues 204 to 207; it reads DTEG. Residues Gly-207, 287-295, Gly-344, and Arg-360 each bind GTP; that span reads KSDILTDEE. Residues 286 to 289 form a G4 motif region; that stretch reads AKSD. A Glycyl lysine isopeptide (Lys-Gly) (interchain with G-Cter in SUMO) cross-link involves residue Lys-287. The stretch at 427–508 forms a coiled coil; it reads ISKQQEEKTL…INSASPNVNH (82 aa). Thr-468 carries the phosphothreonine modification. The tract at residues 496-520 is disordered; that stretch reads ELSINSASPNVNHSPVPTKKKGFLR. A compositionally biased stretch (polar residues) spans 497–510; it reads LSINSASPNVNHSP. Ser-509 carries the phosphoserine modification.

This sequence belongs to the TRAFAC class TrmE-Era-EngA-EngB-Septin-like GTPase superfamily. Septin GTPase family. Component of the septin complex which consists of CDC3, CDC10, CDC11, CDC12 and probably SHS1 and rearranges to a cortical collar of highly ordered filaments at the mother-bud-neck. A complex formed by CDC3, CDC10, CDC11 and CDC12 is capable of forming long filaments in vitro and the components seem to be present in a 2:2:2:2 arrangement in vivo. The filaments are proposed to be formed by the end-to-end polymerization of CDC3-CDC12-CDC11 complexes with CDC10 serving as a bridge to bundle the polymers into paired filaments. Component of the GIN4 complex composed of at least BNI5, CDC3, CDC10, CDC11, CDC12, GIN4, NAP1 and SHS1. Self-associates. Interacts with SIZ1 and SYP1. Post-translationally, phosphorylated by CDC28. Phosphorylation at the end of G1 may facilitate initiation of a new cell cycle by promoting disassembly of the obsolete septin ring from the previous cell cycle. In terms of processing, sumoylated during mitosis on the mother cell side of the bud neck by UBC9/SIZ1. Sumoylation probably plays a central role in regulating septin ring disassembly during the cell cycle.

It is found in the membrane. It localises to the bud neck. In terms of biological role, septins are GTPases involved in cytokinesis that assemble early in the cell cycle as a patch at the incipient bud site and form a ring approximate 15 minutes before bud emergence, which transforms into an hour-glass shaped collar of cortical filaments that spans both sides of the mother-bud neck. This collar persists until just before cytokinesis, when it splits into two rings that occupy opposite sides of the neck. The septins at the bud neck serve as a structural scaffold that recruits different components involved in diverse processes at specific stages during the cell cycle. Many proteins bind asymmetrically to the septin collar. The septin assembly is regulated by protein kinases GIN4 and/or CLA4. May act by recruiting MYO1 and HOF1, a protein involved in septation, to the site of cleavage. Septins are also involved in cell morphogenesis, bud site selection, chitin deposition, cell cycle regulation, cell compartmentalization and spore wall formation. The chain is Cell division control protein 3 (CDC3) from Saccharomyces cerevisiae (strain ATCC 204508 / S288c) (Baker's yeast).